A 201-amino-acid polypeptide reads, in one-letter code: Recombination protein RecR (201 aa).

The C4-type zinc finger occupies 57-72 (CRYCRNLSDAEVCLLC). In terms of domain architecture, Toprim spans 80–175 (QQICVVETPA…QATRLAYGVP (96 aa)).

Belongs to the RecR family.

May play a role in DNA repair. It seems to be involved in an RecBC-independent recombinational process of DNA repair. It may act with RecF and RecO. This is Recombination protein RecR from Dichelobacter nodosus (strain VCS1703A).